We begin with the raw amino-acid sequence, 426 residues long: Gamma-glutamyl phosphate reductase (426 aa).

It belongs to the gamma-glutamyl phosphate reductase family.

The protein resides in the cytoplasm. The catalysed reaction is L-glutamate 5-semialdehyde + phosphate + NADP(+) = L-glutamyl 5-phosphate + NADPH + H(+). The protein operates within amino-acid biosynthesis; L-proline biosynthesis; L-glutamate 5-semialdehyde from L-glutamate: step 2/2. Its function is as follows. Catalyzes the NADPH-dependent reduction of L-glutamate 5-phosphate into L-glutamate 5-semialdehyde and phosphate. The product spontaneously undergoes cyclization to form 1-pyrroline-5-carboxylate. The polypeptide is Gamma-glutamyl phosphate reductase (Cupriavidus metallidurans (strain ATCC 43123 / DSM 2839 / NBRC 102507 / CH34) (Ralstonia metallidurans)).